The primary structure comprises 460 residues: Kynurenine 3-monooxygenase (460 aa).

Residues V13, 32-34 (DFR), and A53 each bind FAD. The L-kynurenine site is built by R83 and Y97. FAD is bound by residues R109, L133, Y195, D314, and 325–328 (QGMN). The L-kynurenine site is built by N373 and Y408.

It belongs to the aromatic-ring hydroxylase family. KMO subfamily. FAD serves as cofactor.

The protein resides in the mitochondrion outer membrane. It carries out the reaction L-kynurenine + NADPH + O2 + H(+) = 3-hydroxy-L-kynurenine + NADP(+) + H2O. It functions in the pathway cofactor biosynthesis; NAD(+) biosynthesis; quinolinate from L-kynurenine: step 1/3. Its function is as follows. Catalyzes the hydroxylation of L-kynurenine (L-Kyn) to form 3-hydroxy-L-kynurenine (L-3OHKyn). Required for synthesis of quinolinic acid. This Saccharomyces cerevisiae (strain ATCC 204508 / S288c) (Baker's yeast) protein is Kynurenine 3-monooxygenase.